Consider the following 151-residue polypeptide: HTH-type transcriptional regulator FL11 (151 aa).

An HTH asnC-type domain is found at 5 to 66; the sequence is LDEIDRRIIK…IVNPEALGYS (62 aa). A DNA-binding region (H-T-H motif) is located at residues 24 to 43; that stretch reads LREISKITGLAESTIHERIK. Residue 98–104 participates in L-arginine binding; the sequence is ETTGDYD. L-lysine contacts are provided by residues Asn-118, Asp-122, and 133 to 135; that span reads THT. L-arginine-binding positions include Asp-122 and 133 to 135; that span reads THT.

As to quaternary structure, homodimer. Binds DNA as a dimer and an octamer.

Its activity is regulated as follows. In the famine mode, FL11 forms dimers and acts as a repressor, leading to growth arrest. In the feast mode, in the presence of high concentrations of lysine or arginine, four dimers assemble into an octamer and cover the fl11 and lysine biosynthesis promoters. This leads to the inhibition of fl11 expression and lysine biosynthesis, decrease of the FL11 concentration in the cell, derepression of the target genes and activation of the metabolism. DNA-binding protein involved in the repression of transcription of a large number of genes, thereby arresting growth, in response to environmental changes. This is HTH-type transcriptional regulator FL11 from Pyrococcus abyssi (strain GE5 / Orsay).